Here is a 260-residue protein sequence, read N- to C-terminus: Ribosomal RNA small subunit methyltransferase G (260 aa).

S-adenosyl-L-methionine is bound by residues Gly-94, Phe-99, 117-119, 145-146, and Arg-164; these read DST and AE. A disordered region spans residues 236-260; that stretch reads APTPPPYPRSPGTPKRQPLGQSNRP. The span at 237–246 shows a compositional bias: pro residues; the sequence is PTPPPYPRSP.

The protein belongs to the methyltransferase superfamily. RNA methyltransferase RsmG family.

It localises to the cytoplasm. Its function is as follows. Specifically methylates the N7 position of a guanine in 16S rRNA. The polypeptide is Ribosomal RNA small subunit methyltransferase G (Synechococcus sp. (strain JA-2-3B'a(2-13)) (Cyanobacteria bacterium Yellowstone B-Prime)).